The primary structure comprises 1272 residues: Myosin-binding protein C, cardiac-type (1272 aa).

The interval 95 to 147 (KEPEKSEPVAPAEASPAPAASELPAPPVESNQNPEVPPAETQPEEPVDPIGLF) is disordered. A compositionally biased stretch (low complexity) spans 102 to 117 (PVAPAEASPAPAASEL). Residues 137–252 (PEEPVDPIGL…NLIVNEAPVS (116 aa)) enclose the Ig-like C2-type 1 domain. Position 265 is a phosphoserine; by PKA and PKC (serine 265). Residue threonine 274 is modified to Phosphothreonine; by PKA and PKC. A Phosphoserine; by PKA modification is found at serine 300. Ig-like C2-type domains lie at 359–451 (KKST…VKEP), 452–542 (PILI…VQEK), 543–640 (KLEV…FVPR), and 644–763 (PKIH…ADIT). Fibronectin type-III domains follow at residues 772 to 868 (PPEA…IAPP) and 870 to 965 (EPTH…VQEI). Residues 969–1057 (PKICVPRHLR…ENMTDTVAIT (89 aa)) form the Ig-like C2-type 6 domain. One can recognise a Fibronectin type-III 3 domain in the interval 1066–1161 (PPQNIKLADV…TKNPAYIQKT (96 aa)). Serine 1169 bears the Phosphoserine; by PKC mark. Residues 1179-1263 (PKFTHPLVNR…VNERGEAEIE (85 aa)) form the Ig-like C2-type 7 domain.

It belongs to the immunoglobulin superfamily. MyBP family. Post-translationally, substrate for phosphorylation by PKA and PKC. Reversible phosphorylation appears to modulate contraction. Expressed specifically in cardiac muscle among adult tissues, but is also expressed transiently in the skeletal muscle at early developmental stages. Isoform Type I is found in embryonic skeletal muscle and isoform Type II is found in both embryonic skeletal and cardiac muscle.

In terms of biological role, thick filament-associated protein located in the crossbridge region of vertebrate striated muscle A bands. In vitro it binds MHC, F-actin and native thin filaments, and modifies the activity of actin-activated myosin ATPase. It may modulate muscle contraction or may play a more structural role. May be involved in the early phase of myofibrillogenesis. The polypeptide is Myosin-binding protein C, cardiac-type (MYBPC3) (Gallus gallus (Chicken)).